Here is a 484-residue protein sequence, read N- to C-terminus: Glutamyl-tRNA(Gln) amidotransferase subunit B, mitochondrial (484 aa).

The protein belongs to the GatB/GatE family. GatB subfamily. Subunit of the heterotrimeric GatFAB amidotransferase (AdT) complex, composed of A, B and F subunits.

Its subcellular location is the mitochondrion. The catalysed reaction is L-glutamyl-tRNA(Gln) + L-glutamine + ATP + H2O = L-glutaminyl-tRNA(Gln) + L-glutamate + ADP + phosphate + H(+). In terms of biological role, allows the formation of correctly charged Gln-tRNA(Gln) through the transamidation of misacylated Glu-tRNA(Gln) in the mitochondria. The reaction takes place in the presence of glutamine and ATP through an activated gamma-phospho-Glu-tRNA(Gln). In Candida tropicalis (strain ATCC MYA-3404 / T1) (Yeast), this protein is Glutamyl-tRNA(Gln) amidotransferase subunit B, mitochondrial.